The primary structure comprises 266 residues: RNA polymerase II subunit A C-terminal domain phosphatase ssu-72 (266 aa).

A disordered region spans residues 1–31 (MSAVDTPTGAASSSKPDQNEQNGQNGGREDS). Residues 9–23 (GAASSSKPDQNEQNG) are compositionally biased toward polar residues.

The protein belongs to the SSU72 phosphatase family. As to quaternary structure, component of the cleavage and polyadenylation factor (CPF) complex.

It localises to the nucleus. It catalyses the reaction O-phospho-L-seryl-[protein] + H2O = L-seryl-[protein] + phosphate. The catalysed reaction is O-phospho-L-threonyl-[protein] + H2O = L-threonyl-[protein] + phosphate. Functionally, processively dephosphorylates Ser-5 of the heptad repeats YSPTSPS in the C-terminal domain of the largest RNA polymerase II subunit (rpb-1). Its function is as follows. Component of the cleavage and polyadenylation factor (CPF) complex, which plays a key role in polyadenylation-dependent pre-mRNA 3'-end formation and cooperates with cleavage factors including the CFIA complex and NAB4/CFIB. Ssu-72 is required for 3'-end formation of snoRNAs. The polypeptide is RNA polymerase II subunit A C-terminal domain phosphatase ssu-72 (ssu-72) (Neurospora crassa (strain ATCC 24698 / 74-OR23-1A / CBS 708.71 / DSM 1257 / FGSC 987)).